Reading from the N-terminus, the 524-residue chain is Inosine-5'-monophosphate dehydrogenase 4 (524 aa).

2 CBS domains span residues 122–183 and 185–241; these read FINS…VVSE and MTKN…PLAS. At S125 the chain carries Phosphoserine. NAD(+) is bound by residues 279-281 and 329-331; these read DSS and GMG. K(+) is bound by residues G331 and G333. Position 334 (S334) interacts with IMP. C336 is a K(+) binding site. The active-site Thioimidate intermediate is the C336. IMP is bound by residues 369-371, 392-393, and 416-420; these read DGG, GG, and YRGMG. R438 acts as the Proton acceptor in catalysis. Q450 is an IMP binding site. Residues E509, G510, and G511 each contribute to the K(+) site.

Belongs to the IMPDH/GMPR family. As to quaternary structure, homotetramer. Seems to be able to form heterotetramers composed from more than 1 of the 3 IMPDH gene products (IMD2-4). K(+) is required as a cofactor.

It localises to the cytoplasm. It carries out the reaction IMP + NAD(+) + H2O = XMP + NADH + H(+). Its pathway is purine metabolism; XMP biosynthesis via de novo pathway; XMP from IMP: step 1/1. Mycophenolic acid (MPA) is a non-competitive inhibitor that prevents formation of the closed enzyme conformation by binding to the same site as the amobile flap. In contrast, mizoribine monophosphate (MZP) is a competitive inhibitor that induces the closed conformation. MPA is a potent inhibitor of mammalian IMPDHs but a poor inhibitor of the bacterial enzymes. MZP is a more potent inhibitor of bacterial IMPDH. Functionally, catalyzes the conversion of inosine 5'-phosphate (IMP) to xanthosine 5'-phosphate (XMP), the first committed and rate-limiting step in the de novo synthesis of guanine nucleotides, and therefore plays an important role in the regulation of cell growth. In Saccharomyces cerevisiae (strain ATCC 204508 / S288c) (Baker's yeast), this protein is Inosine-5'-monophosphate dehydrogenase 4.